The following is a 334-amino-acid chain: Tryptophan--tRNA ligase (334 aa).

Residues 11–13 and 19–20 contribute to the ATP site; these read QPS and GN. The 'HIGH' region motif lies at 12–20; sequence PSGELTIGN. Asp-135 lines the L-tryptophan pocket. Residues 147–149, Val-186, and 195–199 each bind ATP; these read GED and KMSKS. Positions 195-199 match the 'KMSKS' region motif; the sequence is KMSKS.

Belongs to the class-I aminoacyl-tRNA synthetase family. In terms of assembly, homodimer.

It localises to the cytoplasm. It catalyses the reaction tRNA(Trp) + L-tryptophan + ATP = L-tryptophyl-tRNA(Trp) + AMP + diphosphate + H(+). Functionally, catalyzes the attachment of tryptophan to tRNA(Trp). In Salmonella typhi, this protein is Tryptophan--tRNA ligase.